The following is a 215-amino-acid chain: Cytochrome c biogenesis ATP-binding export protein CcmA (215 aa).

The 204-residue stretch at 12–215 (LAAHALTYSR…TRLLHLQKAP (204 aa)) folds into the ABC transporter domain. Position 44-51 (44-51 (GPNGIGKT)) interacts with ATP.

It belongs to the ABC transporter superfamily. CcmA exporter (TC 3.A.1.107) family. As to quaternary structure, the complex is composed of two ATP-binding proteins (CcmA) and two transmembrane proteins (CcmB).

It localises to the cell inner membrane. It catalyses the reaction heme b(in) + ATP + H2O = heme b(out) + ADP + phosphate + H(+). Functionally, part of the ABC transporter complex CcmAB involved in the biogenesis of c-type cytochromes; once thought to export heme, this seems not to be the case, but its exact role is uncertain. Responsible for energy coupling to the transport system. This Xylella fastidiosa (strain Temecula1 / ATCC 700964) protein is Cytochrome c biogenesis ATP-binding export protein CcmA.